An 89-amino-acid polypeptide reads, in one-letter code: Nucleoside triphosphatase I (89 aa).

The 48-residue stretch at 42–89 (FLGLDKMHSLLLFHDTGVGKTITTTFIIKQLKNIYTNWSILLLVKKHL) folds into the Helicase ATP-binding domain. 55 to 62 (HDTGVGKT) provides a ligand contact to ATP.

It belongs to the helicase family. NPH I subfamily.

The enzyme catalyses a ribonucleoside 5'-triphosphate + H2O = a ribonucleoside 5'-diphosphate + phosphate + H(+). In terms of biological role, serves two roles in transcription; it acts in concert with viral termination factor/capping enzyme to catalyze release of UUUUUNU-containing nascent RNA from the elongation complex, and it acts by itself as a polymerase elongation factor to facilitate readthrough of intrinsic pause sites. The protein is Nucleoside triphosphatase I (NPH1) of Swinepox virus (strain Kasza) (SWPV).